The primary structure comprises 195 residues: Protease (195 aa).

Residues 71 to 149 form the Peptidase A2 domain; it reads ALMLVDTGAE…DKWQILGRDV (79 aa). D76 is an active-site residue.

The sequence is that of Protease from Bos taurus (Bovine).